Here is a 209-residue protein sequence, read N- to C-terminus: Large ribosomal subunit protein uL3 (209 aa).

The interval 132-153 is disordered; it reads ATHGNSLSHRVPGSIGQNQTPG. Gln-150 carries the N5-methylglutamine modification.

It belongs to the universal ribosomal protein uL3 family. As to quaternary structure, part of the 50S ribosomal subunit. Forms a cluster with proteins L14 and L19. In terms of processing, methylated by PrmB.

One of the primary rRNA binding proteins, it binds directly near the 3'-end of the 23S rRNA, where it nucleates assembly of the 50S subunit. The chain is Large ribosomal subunit protein uL3 from Erwinia tasmaniensis (strain DSM 17950 / CFBP 7177 / CIP 109463 / NCPPB 4357 / Et1/99).